Consider the following 481-residue polypeptide: Cholesterol 16,22-dihydroxylase CYP90G4 (481 aa).

Residues 4 to 24 (SYLSFFVLSSILVLTLIFFFM) traverse the membrane as a helical segment. Cys426 provides a ligand contact to heme.

It belongs to the cytochrome P450 family. Mainly expressed in leaves and seed pods and, at low levels, in flowers and stems.

Its subcellular location is the membrane. Its pathway is steroid metabolism; cholesterol metabolism. Involved in the biosynthesis of spiroketal steroid and saponin natural products from cholesterol such as diosgenin and analogs (e.g. furostanol and spirostanol), plant defense compounds used as main precursors for the industrial production of steroid hormones. During the 5,6-spiroketalization of cholesterol, catalyzes the hydroxylation of cholesterol to form 16S,22S-dihydroxycholesterol and, possibly, the subsequent conversion of 16S,22S-dihydroxycholesterol into 16-oxo-22-hydroxy-cholesterol and 16-hydroxy-22-oxo-cholesterol. 16-hydroxy-22-oxo-cholesterol submit a spontaneous reaction leading to the production of furostanol-type steroid diastereomers, precursors of diosgenin. In Trigonella foenum-graecum (Fenugreek), this protein is Cholesterol 16,22-dihydroxylase CYP90G4.